Consider the following 404-residue polypeptide: Endophilin-B2 (404 aa).

Met-1 carries the post-translational modification N-acetylmethionine. The segment at 1 to 27 (MDFNMKKLASDAGIFFTRAVQFTEEKF) is membrane-binding amphipathic helix. Ser-10 carries the post-translational modification Phosphoserine. The region spanning 24–291 (EEKFGQAEKT…LGSSQGAIFP (268 aa)) is the BAR domain. The stretch at 209–239 (SASALWNDEVDKAEQELRAAQTEFDRQAEVT) forms a coiled coil. The region spanning 344–404 (SGTRKARVLY…VPVTYLELLS (61 aa)) is the SH3 domain. Residue Ser-404 is modified to Phosphoserine.

Belongs to the endophilin family. Homodimer, and heterodimer with SH3GLB1.

It is found in the cytoplasm. The chain is Endophilin-B2 from Rattus norvegicus (Rat).